We begin with the raw amino-acid sequence, 251 residues long: MTVSINEVSKYFSKQTGTVQVLENINFQLEKGDFVTVIGPSGCGKSTLLKIIAGLDNDFEGEIIIDGERITKPSKKQGFIFQEHRLFPWLTVEENIAADLSLKDKYVKDKVKEWVEIVRLDGFEKSYPKEISGGMSQRVAIARALLRDPNVLLLDEPFGALDAFTRSHLQEVLLNIWEQKKTTMIFVTHDIDEAIYLSNRIVIMSAKPGKIHKVIENKLPYPRSKNSESFQEIRKKVLQQFEYGGLIQTSL.

Residues 3 to 231 (VSINEVSKYF…PRSKNSESFQ (229 aa)) form the ABC transporter domain. 39–46 (GPSGCGKS) contributes to the ATP binding site.

This sequence belongs to the ABC transporter superfamily. Aliphatic sulfonates importer (TC 3.A.1.17.2) family. The complex is composed of two ATP-binding proteins (SsuB), two transmembrane proteins (SsuC) and a solute-binding protein (SsuA).

It is found in the cell membrane. It catalyses the reaction ATP + H2O + aliphatic sulfonate-[sulfonate-binding protein]Side 1 = ADP + phosphate + aliphatic sulfonateSide 2 + [sulfonate-binding protein]Side 1.. Functionally, part of the ABC transporter complex SsuABC involved in aliphatic sulfonates import. Responsible for energy coupling to the transport system. In Bacillus cereus (strain ZK / E33L), this protein is Aliphatic sulfonates import ATP-binding protein SsuB.